The following is a 65-amino-acid chain: MPKIKTVRGAAKRFKKTGKGGFKHKRANLRHILTKKATKRKRHLRPKAMVSKGDLGLVIACLPYA.

Belongs to the bacterial ribosomal protein bL35 family.

This chain is Large ribosomal subunit protein bL35, found in Enterobacter sp. (strain 638).